A 236-amino-acid polypeptide reads, in one-letter code: Phosphoribosylaminoimidazole-succinocarboxamide synthase (236 aa).

This sequence belongs to the SAICAR synthetase family.

It carries out the reaction 5-amino-1-(5-phospho-D-ribosyl)imidazole-4-carboxylate + L-aspartate + ATP = (2S)-2-[5-amino-1-(5-phospho-beta-D-ribosyl)imidazole-4-carboxamido]succinate + ADP + phosphate + 2 H(+). It functions in the pathway purine metabolism; IMP biosynthesis via de novo pathway; 5-amino-1-(5-phospho-D-ribosyl)imidazole-4-carboxamide from 5-amino-1-(5-phospho-D-ribosyl)imidazole-4-carboxylate: step 1/2. The polypeptide is Phosphoribosylaminoimidazole-succinocarboxamide synthase (Streptococcus equi subsp. zooepidemicus (strain MGCS10565)).